A 232-amino-acid chain; its full sequence is tRNA (guanine-N(7)-)-methyltransferase (232 aa).

E38, D63, E90, and D113 together coordinate S-adenosyl-L-methionine. The active site involves D113. Substrate-binding residues include K117 and D149.

Belongs to the class I-like SAM-binding methyltransferase superfamily. TrmB family.

It catalyses the reaction guanosine(46) in tRNA + S-adenosyl-L-methionine = N(7)-methylguanosine(46) in tRNA + S-adenosyl-L-homocysteine. It participates in tRNA modification; N(7)-methylguanine-tRNA biosynthesis. Functionally, catalyzes the formation of N(7)-methylguanine at position 46 (m7G46) in tRNA. This chain is tRNA (guanine-N(7)-)-methyltransferase, found in Syntrophotalea carbinolica (strain DSM 2380 / NBRC 103641 / GraBd1) (Pelobacter carbinolicus).